A 301-amino-acid polypeptide reads, in one-letter code: Prohibitin-2 (301 aa).

2 necessary for transcriptional repression regions span residues Val19 to Ala49 and Ala150 to Asp174. Residues Ser190–Met237 are a coiled coil.

The protein belongs to the prohibitin family. The mitochondrial prohibitin complex consists of two subunits (PHB1 and PHB2), assembled into a membrane-associated ring-shaped supercomplex of approximately 1 mDa.

It localises to the mitochondrion inner membrane. Its subcellular location is the cytoplasm. It is found in the nucleus. The protein resides in the cell membrane. Functionally, protein with pleiotropic attributes mediated in a cell-compartment- and tissue-specific manner, which include the plasma membrane-associated cell signaling functions, mitochondrial chaperone, and transcriptional co-regulator of transcription factors and sex steroid hormones in the nucleus. In terms of biological role, in the mitochondria, together with PHB, forms large ring complexes (prohibitin complexes) in the inner mitochondrial membrane (IMM) and functions as a chaperone protein that stabilizes mitochondrial respiratory enzymes and maintains mitochondrial integrity in the IMM, which is required for mitochondrial morphogenesis, neuronal survival, and normal lifespan. Its function is as follows. In the nucleus, serves as transcriptional co-regulator. This is Prohibitin-2 (PHB2) from Gallus gallus (Chicken).